The primary structure comprises 157 residues: Large ribosomal subunit protein bL17 (157 aa).

The interval 124-157 (AAPVVSKQDRAKRVKGSKKAESRSQENEGGDAAE) is disordered.

It belongs to the bacterial ribosomal protein bL17 family. Part of the 50S ribosomal subunit. Contacts protein L32.

This chain is Large ribosomal subunit protein bL17, found in Chlorobaculum tepidum (strain ATCC 49652 / DSM 12025 / NBRC 103806 / TLS) (Chlorobium tepidum).